We begin with the raw amino-acid sequence, 63 residues long: MKAQDLREKSVEELNSELLNLLREQFNLRMQAATGQLQQTHTLKAVRRDIARVKTVLTEKAGA.

Belongs to the universal ribosomal protein uL29 family.

The protein is Large ribosomal subunit protein uL29 of Vibrio vulnificus (strain CMCP6).